The primary structure comprises 209 residues: tRNA(Phe) 7-((3-amino-3-carboxypropyl)-4-demethylwyosine(37)-N(4))-methyltransferase (209 aa).

The protein belongs to the TYW3 family.

The enzyme catalyses 4-demethyl-7-[(3S)-3-amino-3-carboxypropyl]wyosine(37) in tRNA(Phe) + S-adenosyl-L-methionine = 7-[(3S)-3-amino-3-carboxypropyl]wyosine(37) in tRNA(Phe) + S-adenosyl-L-homocysteine + H(+). In terms of biological role, S-adenosyl-L-methionine-dependent methyltransferase that acts as a component of the wyosine derivatives biosynthesis pathway. Probably methylates N-4 position of wybutosine-86 to produce wybutosine-72. This is tRNA(Phe) 7-((3-amino-3-carboxypropyl)-4-demethylwyosine(37)-N(4))-methyltransferase from Saccharolobus solfataricus (strain ATCC 35092 / DSM 1617 / JCM 11322 / P2) (Sulfolobus solfataricus).